Reading from the N-terminus, the 201-residue chain is U1 small nuclear ribonucleoprotein C (201 aa).

The Matrin-type zinc finger occupies 4 to 36 (YYCEYCDIYLTHSSPVGRRQHNQGRKHISAKIE). Residues 137 to 154 (IQKPYNNFDNKNNNYNNK) are compositionally biased toward low complexity. The interval 137 to 176 (IQKPYNNFDNKNNNYNNKPITNSSYKNDKQDYRNNNENND) is disordered.

Belongs to the U1 small nuclear ribonucleoprotein C family. U1 snRNP is composed of the 7 core Sm proteins B/B', D1, D2, D3, E, F and G that assemble in a heptameric protein ring on the Sm site of the small nuclear RNA to form the core snRNP, and at least 3 U1 snRNP-specific proteins U1-70K, U1-A and U1-C. U1-C interacts with U1 snRNA and the 5' splice-site region of the pre-mRNA.

Its subcellular location is the nucleus. Its function is as follows. Component of the spliceosomal U1 snRNP, which is essential for recognition of the pre-mRNA 5' splice-site and the subsequent assembly of the spliceosome. U1-C is directly involved in initial 5' splice-site recognition for both constitutive and regulated alternative splicing. The interaction with the 5' splice-site seems to precede base-pairing between the pre-mRNA and the U1 snRNA. Stimulates commitment or early (E) complex formation by stabilizing the base pairing of the 5' end of the U1 snRNA and the 5' splice-site region. This chain is U1 small nuclear ribonucleoprotein C, found in Plasmodium yoelii yoelii.